The primary structure comprises 78 residues: WAP four-disulfide core domain protein 12 (78 aa).

A signal peptide spans 1 to 21 (MWPNSILVLTVLLISSTLVTG). The WAP domain occupies 25-72 (KGAEKGVCPPDNVRCIRGEDPQCHNDNDCKDQKICCYWHCGFKCVQPV). 4 disulfides stabilise this stretch: Cys32/Cys60, Cys39/Cys64, Cys47/Cys59, and Cys53/Cys68.

The protein localises to the secreted. In terms of biological role, antibacterial protein. Putative acid-stable proteinase inhibitor. The sequence is that of WAP four-disulfide core domain protein 12 from Rattus norvegicus (Rat).